The following is a 179-amino-acid chain: Pectinesterase inhibitor 5 (179 aa).

An N-terminal signal peptide occupies residues 1 to 25 (MATMLINHMLFLTSLLIVVFPVANA). 2 disulfides stabilise this stretch: cysteine 35–cysteine 44 and cysteine 101–cysteine 141.

This sequence belongs to the PMEI family. As to expression, expressed in seeds, buds, and mature flowers.

It localises to the secreted. Its subcellular location is the extracellular space. It is found in the apoplast. In terms of biological role, pectin methylesterase (PME) inhibitor that targets PME from seeds and modulates PME activity and pectin methylesterification during seed germination. In Arabidopsis thaliana (Mouse-ear cress), this protein is Pectinesterase inhibitor 5.